We begin with the raw amino-acid sequence, 152 residues long: Ribosome maturation factor RimP (152 aa).

It belongs to the RimP family.

The protein resides in the cytoplasm. In terms of biological role, required for maturation of 30S ribosomal subunits. This chain is Ribosome maturation factor RimP, found in Pseudomonas aeruginosa (strain LESB58).